The following is a 1044-amino-acid chain: Sarcoplasmic/endoplasmic reticulum calcium ATPase 2 (1044 aa).

Residues 1–48 (MENAHTKTVEEVLGHFGVNESTGLSLEQVKKLKERWGSNELPAEEGKT) are Cytoplasmic-facing. S38 carries the post-translational modification Phosphoserine. Residues 49–69 (LLELVIEQFEDLLVRILLLAA) traverse the membrane as a helical segment. Topologically, residues 70–89 (CISFVLAWFEEGEETITAFV) are lumenal. A helical transmembrane segment spans residues 90 to 110 (EPFVILLILVANAIVGVWQER). Topologically, residues 111–253 (NAENAIEALK…QERTPLQQKL (143 aa)) are cytoplasmic. The helical transmembrane segment at 254 to 273 (DEFGEQLSKVISLICIAVWI) threads the bilayer. Residues 274–295 (INIGHFNDPVHGGSWIRGAIYY) are Lumenal-facing. 2 positions are modified to 3'-nitrotyrosine: Y294 and Y295. Residues 296-313 (FKIAVALAVAAIPEGLPA) form a helical membrane-spanning segment. Ca(2+) contacts are provided by V304, A305, I307, and E309. Residues 314–756 (VITTCLALGT…EEGRAIYNNM (443 aa)) are Cytoplasmic-facing. D351 (4-aspartylphosphate intermediate) is an active-site residue. Positions 351 and 353 each coordinate Mg(2+). T353 contributes to the ATP binding site. At T441 the chain carries Phosphothreonine. Residues E442, R489, and K514 each contribute to the ATP site. Position 531 is a phosphoserine (S531). ATP is bound at residue R559. The segment at 575–594 (MHLEDSANFIKYETNLTFVG) is interaction with HAX1. At S580 the chain carries Phosphoserine. T624, G625, and D626 together coordinate ATP. A phosphoserine mark is found at S661 and S663. ATP contacts are provided by R677 and K683. D702 is a binding site for Mg(2+). N705 contributes to the ATP binding site. A helical membrane pass occupies residues 757–776 (KQFIRYLISSNVGEVVCIFL). Residues N767 and E770 each contribute to the Ca(2+) site. The Lumenal segment spans residues 777 to 786 (TAALGFPEAL). A helical membrane pass occupies residues 787 to 807 (IPVQLLWVNLVTDGLPATALG). Residues 787–807 (IPVQLLWVNLVTDGLPATALG) are interaction with PLN. Residues 788-1044 (PVQLLWVNLV…DTNFSDMFWS (257 aa)) form an interaction with TMEM64 and PDIA3 region. 3 residues coordinate Ca(2+): N795, T798, and D799. The Cytoplasmic segment spans residues 808-827 (FNPPDLDIMNKPPRNPKEPL). A helical membrane pass occupies residues 828-850 (ISGWLFFRYLAIGCYVGAATVGA). Over 851–896 (AAWWFIAADGGPRVSFYQLSHFLQCKEDNPDFDGVDCAIFESPYPM) the chain is Lumenal. A disulfide bridge links C875 with C887. A helical transmembrane segment spans residues 897 to 916 (TMALSVLVTIEMCNALNSLS). E907 lines the Ca(2+) pocket. At 917–929 (ENQSLLRMPPWEN) the chain is on the cytoplasmic side. Residues 930–948 (IWLVGSICLSMSLHFLILY) traverse the membrane as a helical segment. Residues 931 to 942 (WLVGSICLSMSL) form an interaction with PLN region. Residues 949–963 (VEPLPLIFQITPLNL) lie on the Lumenal side of the membrane. The chain crosses the membrane as a helical span at residues 964–984 (TQWLMVLKISLPVILMDETLK). The Cytoplasmic segment spans residues 985–1044 (FVARNYLEQPGKECVQPATKSSCSLSACTDGISWPFVLLIMPLVVWVYSTDTNFSDMFWS).

The protein belongs to the cation transport ATPase (P-type) (TC 3.A.3) family. Type IIA subfamily. In terms of assembly, interacts with sarcolipin (SLN); the interaction inhibits ATP2A2 Ca(2+) affinity. Interacts with phospholamban (PLN); the interaction inhibits ATP2A2 Ca(2+) affinity. Interacts with myoregulin (MRLN). Interacts with ARLN and ERLN; the interactions inhibit ATP2A2 Ca(2+) affinity. Interacts with STRIT1/DWORF; the interaction results in activation of ATP2A2. Interacts with the monomeric forms of SLN, PLN, ARLN, ERLN and STRI1/DWORF. Interacts with HAX1. Interacts with S100A8 and S100A9. Interacts with SLC35G1 and STIM1. Interacts with TMEM203. Interacts with TMEM64 and PDIA3. Interacts with TMX1. Interacts with TMX2. Interacts with VMP1; VMP1 competes with PLN and SLN to prevent them from forming an inhibitory complex with ATP2A2. Interacts with ULK1. Interacts with S100A1 in a Ca(2+)-dependent manner. Interacts with TUNAR. Interacts with FLVCR2; this interaction occurs in the absence of heme and promotes ATP2A2 proteasomal degradation; this complex is dissociated upon heme binding. Interacts with FNIP1. As to quaternary structure, interacts with TRAM2 (via C-terminus). It depends on Mg(2+) as a cofactor. Nitrated under oxidative stress. Nitration on the two tyrosine residues inhibits catalytic activity. Post-translationally, serotonylated on Gln residues by TGM2 in response to hypoxia, leading to its inactivation. Isoform 2 is highly expressed in heart and slow twitch skeletal muscle. Isoform 2 is widely expressed.

It localises to the endoplasmic reticulum membrane. The protein resides in the sarcoplasmic reticulum membrane. It catalyses the reaction Ca(2+)(in) + ATP + H2O = Ca(2+)(out) + ADP + phosphate + H(+). Its activity is regulated as follows. Has different conformational states with differential Ca2+ affinity. The E1 conformational state (active form) shows high Ca(2+) affinity, while the E2 state exhibits low Ca(2+) affinity. Binding of ATP allosterically increases its affinity for subsequent binding of Ca2+. Reversibly inhibited by phospholamban (PLN) at low calcium concentrations. PLN inhibits ATP2A2 Ca(2+) affinity by disrupting its allosteric activation by ATP. Inhibited by sarcolipin (SLN) and myoregulin (MRLN). The inhibition is blocked by VMP1. Enhanced by STRIT1/DWORF; STRIT1 increases activity by displacing sarcolipin (SLN), phospholamban (PLN) and myoregulin (MRLN). Stabilizes SERCA2 in its E2 state. Its function is as follows. This magnesium-dependent enzyme catalyzes the hydrolysis of ATP coupled with the translocation of calcium from the cytosol to the sarcoplasmic reticulum lumen. Involved in autophagy in response to starvation. Upon interaction with VMP1 and activation, controls ER-isolation membrane contacts for autophagosome formation. Also modulates ER contacts with lipid droplets, mitochondria and endosomes. In coordination with FLVCR2 mediates heme-stimulated switching from mitochondrial ATP synthesis to thermogenesis. Involved in the regulation of the contraction/relaxation cycle. Acts as a regulator of TNFSF11-mediated Ca(2+) signaling pathways via its interaction with TMEM64 which is critical for the TNFSF11-induced CREB1 activation and mitochondrial ROS generation necessary for proper osteoclast generation. Association between TMEM64 and SERCA2 in the ER leads to cytosolic Ca(2+) spiking for activation of NFATC1 and production of mitochondrial ROS, thereby triggering Ca(2+) signaling cascades that promote osteoclast differentiation and activation. The chain is Sarcoplasmic/endoplasmic reticulum calcium ATPase 2 from Mus musculus (Mouse).